The following is a 396-amino-acid chain: L-lactate dehydrogenase (396 aa).

The FMN hydroxy acid dehydrogenase domain maps to 1–380 (MIISAASDYR…TQDSLVQGLG (380 aa)). Residue tyrosine 24 participates in substrate binding. FMN is bound by residues serine 106 and glutamine 127. Residue tyrosine 129 participates in substrate binding. Threonine 155 contacts FMN. Arginine 164 contacts substrate. Lysine 251 lines the FMN pocket. Residue histidine 275 is the Proton acceptor of the active site. Arginine 278 lines the substrate pocket. Residue 306 to 330 (DSGIRNGLDVVRMIALGADTVLLGR) participates in FMN binding.

It belongs to the FMN-dependent alpha-hydroxy acid dehydrogenase family. Requires FMN as cofactor.

The protein localises to the cell inner membrane. The catalysed reaction is (S)-lactate + A = pyruvate + AH2. In terms of biological role, catalyzes the conversion of L-lactate to pyruvate. Is coupled to the respiratory chain. In Escherichia coli O127:H6 (strain E2348/69 / EPEC), this protein is L-lactate dehydrogenase.